Here is a 360-residue protein sequence, read N- to C-terminus: MGSNEEGNPTNNSDKPSQAAAPEQSNVHVYHHDWAAMQAYYGPRVGIPQYYNSNLAPGHAPPPYMWASPSPMMAPYGAPYPPFCPPGGVYAHPGVQMGSQPQGPVSQSASGVTTPLTIDAPANSAGNSDHGFMKKLKEFDGLAMSISNNKVGSAEHSSSEHRSSQSSENDGSSNGSDGNTTGGEQSRRKRRQQRSPSTGERPSSQNSLPLRGENEKPDVTMGTPVMPTAMSFQNSAGMNGVPQPWNEKEVKREKRKQSNRESARRSRLRKQAETEQLSVKVDALVAENMSLRSKLGQLNNESEKLRLENEAILDQLKAQATGKTENLISRVDKNNSVSGSKTVQHQLLNASPITDPVAAS.

Polar residues predominate over residues Met1–Pro16. Disordered stretches follow at residues Met1 to Asn26 and Lys150 to Glu275. Residues Ser164 to Glu184 show a composition bias toward low complexity. Over residues Thr198–Leu208 the composition is skewed to polar residues. A compositionally biased stretch (basic and acidic residues) spans Asn246–Arg264. Positions Glu249–Ile312 constitute a bZIP domain. Residues Lys251 to Lys270 are basic motif. The leucine-zipper stretch occupies residues Leu277 to Ile312. Positions Asn335–Pro352 are enriched in polar residues. Residues Asn335–Ser360 are disordered.

It belongs to the bZIP family. As to quaternary structure, DNA-binding heterodimer. Interacts with GBF4. Interacts with BZIP16 and BZIP68. As to expression, found in both light and dark grown leaves.

It localises to the nucleus. Binds to the G-box motif (5'-CCACGTGG-3') of the rbcS-1A gene promoter. G-box and G-box-like motifs are cis-acting elements defined in promoters of certain plant genes which are regulated by such diverse stimuli as light-induction or hormone control. GBF2 is found to bind asymmetrically to the G-box. This is G-box-binding factor 2 (GBF2) from Arabidopsis thaliana (Mouse-ear cress).